Here is a 96-residue protein sequence, read N- to C-terminus: Putative pterin-4-alpha-carbinolamine dehydratase (96 aa).

Belongs to the pterin-4-alpha-carbinolamine dehydratase family.

The catalysed reaction is (4aS,6R)-4a-hydroxy-L-erythro-5,6,7,8-tetrahydrobiopterin = (6R)-L-erythro-6,7-dihydrobiopterin + H2O. The protein is Putative pterin-4-alpha-carbinolamine dehydratase of Brucella anthropi (strain ATCC 49188 / DSM 6882 / CCUG 24695 / JCM 21032 / LMG 3331 / NBRC 15819 / NCTC 12168 / Alc 37) (Ochrobactrum anthropi).